The primary structure comprises 408 residues: UDP-N-acetylglucosamine--dolichyl-phosphate N-acetylglucosaminephosphotransferase (408 aa).

Residues 1-10 (MWAFPELPLP) are Lumenal-facing. A helical transmembrane segment spans residues 11 to 38 (LLVNLFGSLLGFVATVTLIPAFRSHFIA). Topologically, residues 39-58 (ARLCGQDLNKLSRQQIPESQ) are cytoplasmic. UDP-N-acetyl-alpha-D-glucosamine-binding positions include 44 to 46 (QDL) and E56. The helical transmembrane segment at 59-78 (GVICGAVFLIILFCFIPFPF) threads the bilayer. The Lumenal segment spans residues 79–91 (LNCFVEEQCKAFP). A helical membrane pass occupies residues 92-118 (HHEFVALIGALLAICCMIFLGFADDVL). Over 119 to 121 (NLR) the chain is Cytoplasmic. Residues 122 to 143 (WRHKLLLPTAASLPLLMVYFTN) form a helical membrane-spanning segment. K125 is a dolichyl phosphate binding site. Over 144-166 (FGNTTIVVPKPFRWILGLHLDLG) the chain is Lumenal. A glycan (N-linked (GlcNAc...) asparagine) is linked at N146. The helical transmembrane segment at 167–186 (ILYYVYMGLLAVFCTNAINI) threads the bilayer. Residue 178-186 (VFCTNAINI) coordinates dolichyl phosphate. N185 is a binding site for Mg(2+). The Cytoplasmic segment spans residues 187–192 (LAGING). Residue N191 coordinates UDP-N-acetyl-alpha-D-glucosamine. Residues 193–213 (LEAGQSLVISASIIVFNLVEL) form a helical membrane-spanning segment. Residues 214 to 218 (EGDYR) lie on the Lumenal side of the membrane. A helical transmembrane segment spans residues 219–242 (DDHVFSLYFMIPFFFTTLGLLYHN). Residues 243–250 (WYPSQVFV) lie on the Cytoplasmic side of the membrane. The helical transmembrane segment at 251-269 (GDTFCYFAGMTFAVVGILG) threads the bilayer. D252 is a Mg(2+) binding site. Topologically, residues 270 to 271 (HF) are lumenal. The chain crosses the membrane as a helical span at residues 272–293 (SKTMLLFFIPQVFNFLYSLPQL). Residues 294–375 (LHAIPCPRHR…LLLKIFGPIH (82 aa)) are Cytoplasmic-facing. 301–303 (RHR) provides a ligand contact to UDP-N-acetyl-alpha-D-glucosamine. The chain crosses the membrane as a helical span at residues 376 to 400 (ERNLTLLLLLLQILSSAVTFSIRYQ). At 401–408 (LVRLFYDV) the chain is on the lumenal side.

It belongs to the glycosyltransferase 4 family. Homodimer. Requires Mg(2+) as cofactor.

The protein localises to the endoplasmic reticulum membrane. The catalysed reaction is a di-trans,poly-cis-dolichyl phosphate + UDP-N-acetyl-alpha-D-glucosamine = an N-acetyl-alpha-D-glucosaminyl-diphospho-di-trans,poly-cis-dolichol + UMP. Its pathway is protein modification; protein glycosylation. Inhibited by natural nucleoside antibiotic tunicamycin, which acts as a structural analog and competitor of UDP-GlcNAc. Its function is as follows. UDP-N-acetylglucosamine--dolichyl-phosphate N-acetylglucosaminephosphotransferase that operates in the biosynthetic pathway of dolichol-linked oligosaccharides, the glycan precursors employed in protein asparagine (N)-glycosylation. The assembly of dolichol-linked oligosaccharides begins on the cytosolic side of the endoplasmic reticulum membrane and finishes in its lumen. The sequential addition of sugars to dolichol pyrophosphate produces dolichol-linked oligosaccharides containing fourteen sugars, including two GlcNAcs, nine mannoses and three glucoses. Once assembled, the oligosaccharide is transferred from the lipid to nascent proteins by oligosaccharyltransferases. Catalyzes the initial step of dolichol-linked oligosaccharide biosynthesis, transfering GlcNAc-1-P from cytosolic UDP-GlcNAc onto the carrier lipid dolichyl phosphate (P-dolichol), yielding GlcNAc-P-P-dolichol embedded in the cytoplasmic leaflet of the endoplasmic reticulum membrane. The sequence is that of UDP-N-acetylglucosamine--dolichyl-phosphate N-acetylglucosaminephosphotransferase (DPAGT1) from Cricetulus griseus (Chinese hamster).